Consider the following 239-residue polypeptide: DnaA regulatory inactivator Hda (239 aa).

Belongs to the DnaA family. HdA subfamily. In terms of assembly, the active form seems to be an ADP-bound monomer. Forms the RIDA complex (regulatory inactivation of DnaA) of ATP-DnaA, ADP-Hda and the DNA-loaded beta sliding clamp (dnaN).

In terms of biological role, mediates the interaction of DNA replication initiator protein DnaA with DNA polymerase subunit beta sliding clamp (dnaN). Stimulates hydrolysis of ATP-DnaA to ADP-DnaA, rendering DnaA inactive for reinitiation, a process called regulatory inhibition of DnaA or RIDA. The chain is DnaA regulatory inactivator Hda from Yersinia pseudotuberculosis serotype O:1b (strain IP 31758).